A 257-amino-acid chain; its full sequence is Protein Cmaq_1209 (257 aa).

This sequence belongs to the CinA family.

The protein is Protein Cmaq_1209 of Caldivirga maquilingensis (strain ATCC 700844 / DSM 13496 / JCM 10307 / IC-167).